The following is a 541-amino-acid chain: Chaperonin GroEL 2 (541 aa).

Residues 29 to 32 (TLGP), 86 to 90 (DGTTT), glycine 413, 476 to 478 (NAA), and aspartate 492 each bind ATP.

It belongs to the chaperonin (HSP60) family. Forms a cylinder of 14 subunits composed of two heptameric rings stacked back-to-back. Interacts with the co-chaperonin GroES.

Its subcellular location is the secreted. The protein resides in the capsule. It is found in the cell surface. It localises to the cell wall. It carries out the reaction ATP + H2O + a folded polypeptide = ADP + phosphate + an unfolded polypeptide.. Functionally, together with its co-chaperonin GroES, plays an essential role in assisting protein folding. The GroEL-GroES system forms a nano-cage that allows encapsulation of the non-native substrate proteins and provides a physical environment optimized to promote and accelerate protein folding. This Mycobacterium ulcerans (strain Agy99) protein is Chaperonin GroEL 2.